Here is a 904-residue protein sequence, read N- to C-terminus: Translation initiation factor IF-2 (904 aa).

The interval 239-316 is disordered; the sequence is QAATQAKTSE…DDGQGSFQAP (78 aa). Residues 248-278 are compositionally biased toward basic and acidic residues; that stretch reads EGAEKGTLHKKPETPGKKGDKGGRAADDGKK. The tr-type G domain occupies 404–571; the sequence is HRAPVVTVMG…QVLLQAEILE (168 aa). Positions 413–420 are G1; that stretch reads GHVDHGKT. Position 413 to 420 (413 to 420) interacts with GTP; it reads GHVDHGKT. Positions 438–442 are G2; that stretch reads GITQH. Residues 459–462 form a G3 region; it reads DTPG. GTP-binding positions include 459-463 and 513-516; these read DTPGH and NKID. Residues 513-516 are G4; that stretch reads NKID. The segment at 549–551 is G5; that stretch reads SAK.

Belongs to the TRAFAC class translation factor GTPase superfamily. Classic translation factor GTPase family. IF-2 subfamily.

It is found in the cytoplasm. Its function is as follows. One of the essential components for the initiation of protein synthesis. Protects formylmethionyl-tRNA from spontaneous hydrolysis and promotes its binding to the 30S ribosomal subunits. Also involved in the hydrolysis of GTP during the formation of the 70S ribosomal complex. The polypeptide is Translation initiation factor IF-2 (Dechloromonas aromatica (strain RCB)).